Reading from the N-terminus, the 766-residue chain is BMP/retinoic acid-inducible neural-specific protein 3 (766 aa).

Residues 1–33 (MIWRRRAGAELSSLMALWEWIVLSLHCWVLAVA) form the signal peptide. Residues 74–264 (RYKIYREFGR…FVQAALSYIA (191 aa)) enclose the MACPF domain. N168, N337, N456, N562, N609, and N641 each carry an N-linked (GlcNAc...) asparagine glycan.

It belongs to the BRINP family. In terms of tissue distribution, expressed in olfactory bulb, cerebellum and neuronal layers in hippocampus.

It is found in the secreted. The protein resides in the mitochondrion. Its function is as follows. Inhibits neuronal cell proliferation by negative regulation of the cell cycle transition. Promotes pituitary gonadotrope cell proliferation, migration and invasion, when overexpressed. May play a role in cell pituitary tumor development. The chain is BMP/retinoic acid-inducible neural-specific protein 3 (Brinp3) from Rattus norvegicus (Rat).